The primary structure comprises 88 residues: Large ribosomal subunit protein bL31B (88 aa).

Belongs to the bacterial ribosomal protein bL31 family. Type B subfamily. In terms of assembly, part of the 50S ribosomal subunit.

The protein is Large ribosomal subunit protein bL31B of Nocardia farcinica (strain IFM 10152).